Reading from the N-terminus, the 159-residue chain is Phosphopantetheine adenylyltransferase (159 aa).

Residue threonine 10 participates in substrate binding. Residues 10 to 11 (TF) and histidine 18 contribute to the ATP site. Residues lysine 42, methionine 74, and arginine 88 each coordinate substrate. ATP-binding positions include 89-91 (GLR), glutamate 99, and 124-130 (WSFISSS).

This sequence belongs to the bacterial CoaD family. In terms of assembly, homohexamer. The cofactor is Mg(2+).

It localises to the cytoplasm. It catalyses the reaction (R)-4'-phosphopantetheine + ATP + H(+) = 3'-dephospho-CoA + diphosphate. It participates in cofactor biosynthesis; coenzyme A biosynthesis; CoA from (R)-pantothenate: step 4/5. In terms of biological role, reversibly transfers an adenylyl group from ATP to 4'-phosphopantetheine, yielding dephospho-CoA (dPCoA) and pyrophosphate. The polypeptide is Phosphopantetheine adenylyltransferase (Shigella dysenteriae serotype 1 (strain Sd197)).